The following is a 413-amino-acid chain: Multidrug resistance protein MdtM (413 aa).

Topologically, residues 1–14 are cytoplasmic; sequence MQRIIQFFSQRATT. A helical transmembrane segment spans residues 15 to 35; that stretch reads LFFPMALILYDFAAYLTTDLI. Residues 36-51 lie on the Periplasmic side of the membrane; it reads QPGIINVVRDFNADVS. A helical membrane pass occupies residues 52-72; that stretch reads LAPASVSLYLAGGMALQWLLG. Over 73 to 81 the chain is Cytoplasmic; sequence PLSDRIGRR. Residues 82 to 102 traverse the membrane as a helical segment; sequence PVLIAGALIFTLACAATLLTT. The Periplasmic segment spans residues 103-106; that stretch reads SMTQ. A helical transmembrane segment spans residues 107–127; sequence FLVARFVQGTSICFIATVGYV. At 128–140 the chain is on the cytoplasmic side; it reads TVQEAFGQTKAIK. The helical transmembrane segment at 141-161 threads the bilayer; it reads LMAIITSIVLVAPVIGPLSGA. Residues 162–170 are Periplasmic-facing; it reads ALMHFVHWK. The helical transmembrane segment at 171–191 threads the bilayer; the sequence is VLFGIIAVMGLLALCGLLLAM. The Cytoplasmic segment spans residues 192 to 225; it reads PETVQRGAVPFSAVSVLRDFRNVFRNPIFLTGAA. The chain crosses the membrane as a helical span at residues 226–246; sequence TLSLSYIPMMSWVAVSPVILI. Over 247–254 the chain is Periplasmic; it reads DAGGMSTS. The chain crosses the membrane as a helical span at residues 255-275; it reads QFAWAQVPVFGAVIVANMIVV. Residues 276–289 lie on the Cytoplasmic side of the membrane; it reads RLVKDPTRPRFIWR. 2 helical membrane-spanning segments follow: residues 290 to 310 and 311 to 331; these read AVPIQLSGLATLLLGNLLLPH and VWLWSVLGTSLYAFGIGMIFP. At 332–351 the chain is on the cytoplasmic side; it reads TLFRFTLFSNNLPKGTVSAS. The chain crosses the membrane as a helical span at residues 352–372; the sequence is LNMVILTVMAVSVEVGRWLWF. Residues 373 to 376 are Periplasmic-facing; the sequence is HGGR. Residues 377 to 397 traverse the membrane as a helical segment; the sequence is LPFHLLAAVAGVIVVFTLATL. At 398–413 the chain is on the cytoplasmic side; sequence LQRVRQHEAAELAAEK.

The protein belongs to the major facilitator superfamily.

The protein localises to the cell inner membrane. In terms of biological role, proton-dependent efflux pump. Confers resistance to a broad spectrum of chemically unrelated substrates. This chain is Multidrug resistance protein MdtM (mdtM), found in Salmonella typhimurium (strain LT2 / SGSC1412 / ATCC 700720).